The primary structure comprises 71 residues: Cold shock-like protein CspB (71 aa).

The region spanning 7-67 is the CSD domain; the sequence is GLVKWFNADK…GAKGPAAANV (61 aa).

The protein resides in the cytoplasm. The polypeptide is Cold shock-like protein CspB (cspB) (Escherichia coli (strain K12)).